Consider the following 118-residue polypeptide: Large ribosomal subunit protein bL19 (118 aa).

It belongs to the bacterial ribosomal protein bL19 family.

Functionally, this protein is located at the 30S-50S ribosomal subunit interface and may play a role in the structure and function of the aminoacyl-tRNA binding site. The protein is Large ribosomal subunit protein bL19 of Helicobacter pylori (strain HPAG1).